Here is a 44-residue protein sequence, read N- to C-terminus: MKIKISIEISLSLLSEHYKRNENCISNMLVIGEGPRGETIVERF.

This is an uncharacterized protein from Saccharomyces cerevisiae (strain ATCC 204508 / S288c) (Baker's yeast).